Consider the following 355-residue polypeptide: Histidinol-phosphate aminotransferase (355 aa).

Lys-214 carries the N6-(pyridoxal phosphate)lysine modification.

Belongs to the class-II pyridoxal-phosphate-dependent aminotransferase family. Histidinol-phosphate aminotransferase subfamily. Homodimer. Pyridoxal 5'-phosphate serves as cofactor.

It carries out the reaction L-histidinol phosphate + 2-oxoglutarate = 3-(imidazol-4-yl)-2-oxopropyl phosphate + L-glutamate. Its pathway is amino-acid biosynthesis; L-histidine biosynthesis; L-histidine from 5-phospho-alpha-D-ribose 1-diphosphate: step 7/9. This Buchnera aphidicola subsp. Schizaphis graminum (strain Sg) protein is Histidinol-phosphate aminotransferase (hisC).